Reading from the N-terminus, the 417-residue chain is MEKFVIRGGKPLRGTVQISGAKNSAVAVLPAALLADSPSVIDNLPDIKDIETLAEIIKRLGGKVEKGKHEIKIDPTGLNSFHPPRELASRMRASYYLIGALLSKFNEAIIPMPGGCNIGVRPIDQHIKGFEALGAETTIEHGFIRIKAEKLRGAHIYFDVVSVGATINLMLAAVKAEGVTILENCAKEPHVVDVANFLNAMGANIKGAGTDTIKITGVDKLEGCHYTIIPDQIEAGTYMVAAAATGGDVYVKGVIPTHLESIIAKLVEMGVIVEEYDDVIRVRREGPLKRVDIKTLPYPGFPTDMQQPFAVLLALADGISVITENIYENRFRYLEELKKMGMKVRVEGRSAIIEGVGKLTGAPVYATDLRGGAAMVIAGLAAEGITEVLDIYHIDRGYEAMEVKLQALGADIIRIRE.

22–23 contacts phosphoenolpyruvate; that stretch reads KN. Arginine 92 contacts UDP-N-acetyl-alpha-D-glucosamine. The active-site Proton donor is the cysteine 116. Cysteine 116 is subject to 2-(S-cysteinyl)pyruvic acid O-phosphothioketal. UDP-N-acetyl-alpha-D-glucosamine is bound by residues 121–125, aspartate 304, and isoleucine 326; that span reads RPIDQ.

Belongs to the EPSP synthase family. MurA subfamily.

The protein resides in the cytoplasm. The enzyme catalyses phosphoenolpyruvate + UDP-N-acetyl-alpha-D-glucosamine = UDP-N-acetyl-3-O-(1-carboxyvinyl)-alpha-D-glucosamine + phosphate. The protein operates within cell wall biogenesis; peptidoglycan biosynthesis. Functionally, cell wall formation. Adds enolpyruvyl to UDP-N-acetylglucosamine. The polypeptide is UDP-N-acetylglucosamine 1-carboxyvinyltransferase 3 (Caldanaerobacter subterraneus subsp. tengcongensis (strain DSM 15242 / JCM 11007 / NBRC 100824 / MB4) (Thermoanaerobacter tengcongensis)).